The sequence spans 361 residues: D-alanine--D-alanine ligase (361 aa).

The 207-residue stretch at 144–350 folds into the ATP-grasp domain; that stretch reads KLCVSEAGIA…FPELCDRLLQ (207 aa). 177 to 232 provides a ligand contact to ATP; sequence PETLIYPVFVKPAHLGSSVGISKVSVQGELPEALAHACNLDTKVLIEQAMHGKEIE. Mg(2+) is bound by residues aspartate 303, glutamate 317, and asparagine 319.

It belongs to the D-alanine--D-alanine ligase family. Mg(2+) serves as cofactor. It depends on Mn(2+) as a cofactor.

The protein localises to the cytoplasm. It catalyses the reaction 2 D-alanine + ATP = D-alanyl-D-alanine + ADP + phosphate + H(+). The protein operates within cell wall biogenesis; peptidoglycan biosynthesis. Its function is as follows. Cell wall formation. The protein is D-alanine--D-alanine ligase of Chlorobium phaeovibrioides (strain DSM 265 / 1930) (Prosthecochloris vibrioformis (strain DSM 265)).